A 335-amino-acid chain; its full sequence is Erlin-2 (335 aa).

Residues 1 to 2 lie on the Cytoplasmic side of the membrane; sequence MS. Residues 3–23 traverse the membrane as a helical segment; that stretch reads HAGAIAAIGVALIAAALFSAI. At 24–335 the chain is on the lumenal side; the sequence is HKIEEGHVGV…ALNEPAVGDE (312 aa). An N-linked (GlcNAc...) asparagine glycan is attached at Asn106. Positions 310–321 are enriched in polar residues; it reads AGPSVQSATLLQ. The disordered stretch occupies residues 310 to 335; the sequence is AGPSVQSATLLQDDSPALNEPAVGDE.

The protein belongs to the band 7/mec-2 family.

It localises to the endoplasmic reticulum membrane. Functionally, mediates the endoplasmic reticulum-associated degradation (ERAD) of inositol 1,4,5-trisphosphate receptors (IP3Rs). Promotes sterol-accelerated ERAD of HMGCR. Involved in regulation of cellular cholesterol homeostasis by regulation the SREBP signaling pathway. The chain is Erlin-2 (erlin2) from Xenopus tropicalis (Western clawed frog).